We begin with the raw amino-acid sequence, 300 residues long: tRNA dimethylallyltransferase 1 (300 aa).

13-20 (GPTGVGKT) lines the ATP pocket. Substrate is bound at residue 15–20 (TGVGKT). Residues 38–41 (DSRQ) form an interaction with substrate tRNA region.

Belongs to the IPP transferase family. Monomer. Mg(2+) is required as a cofactor.

The catalysed reaction is adenosine(37) in tRNA + dimethylallyl diphosphate = N(6)-dimethylallyladenosine(37) in tRNA + diphosphate. In terms of biological role, catalyzes the transfer of a dimethylallyl group onto the adenine at position 37 in tRNAs that read codons beginning with uridine, leading to the formation of N6-(dimethylallyl)adenosine (i(6)A). The polypeptide is tRNA dimethylallyltransferase 1 (Porphyromonas gingivalis (strain ATCC BAA-308 / W83)).